A 372-amino-acid chain; its full sequence is GTPase Obg (372 aa).

In terms of domain architecture, Obg spans 1–159 (MKFVDEATIE…RRLRLELKVL (159 aa)). Residues 160 to 336 (ADVGLLGLPN…LIWALQDYLD (177 aa)) form the OBG-type G domain. GTP contacts are provided by residues 166–173 (GLPNAGKS), 191–195 (FTTLH), 213–216 (DIPG), 288–291 (NKLD), and 317–319 (SGL). Ser-173 and Thr-193 together coordinate Mg(2+). The tract at residues 341 to 372 (KEQITQDKADGSYVHEDPRFDTTRDAPPSGKD) is disordered.

It belongs to the TRAFAC class OBG-HflX-like GTPase superfamily. OBG GTPase family. In terms of assembly, monomer. It depends on Mg(2+) as a cofactor.

It localises to the cytoplasm. Its function is as follows. An essential GTPase which binds GTP, GDP and possibly (p)ppGpp with moderate affinity, with high nucleotide exchange rates and a fairly low GTP hydrolysis rate. Plays a role in control of the cell cycle, stress response, ribosome biogenesis and in those bacteria that undergo differentiation, in morphogenesis control. This Bordetella avium (strain 197N) protein is GTPase Obg.